The sequence spans 237 residues: Uridylate kinase (237 aa).

12 to 15 provides a ligand contact to ATP; the sequence is KLSG. The involved in allosteric activation by GTP stretch occupies residues 20–25; it reads GEDGLG. Gly-54 is a binding site for UMP. 2 residues coordinate ATP: Gly-55 and Arg-59. UMP-binding positions include Asp-74 and 135–142; that span reads TGNPFFTT. Residues Thr-162, Tyr-168, and Asp-171 each coordinate ATP.

It belongs to the UMP kinase family. In terms of assembly, homohexamer.

The protein resides in the cytoplasm. It catalyses the reaction UMP + ATP = UDP + ADP. It functions in the pathway pyrimidine metabolism; CTP biosynthesis via de novo pathway; UDP from UMP (UMPK route): step 1/1. Allosterically activated by GTP. Inhibited by UTP. Functionally, catalyzes the reversible phosphorylation of UMP to UDP. This Haemophilus influenzae (strain PittGG) protein is Uridylate kinase.